A 426-amino-acid chain; its full sequence is MKHLTEMVRQHKAGKTNGIYAVCSAHPLVLEAAIRYASANQTPLLIEATSNQVDQFGGYTGMTPADFRGFVCQLADSLNFPQDALILGGDHLGPNRWQNLPAAQAMANADDLIKSYVAAGFKKIHLDCSMSCQDDPIPLTDDIVAERAARLAKVAEETCREHFGEADLEYVIGTEVPVPGGAHETLSELAVTTPDAARATLEAHRHAFEKQGLNAIWPRIIALVVQPGVEFDHTNVIDYQPAKAAALSQMVENYETLIFEAHSTDYQTPQSLRQLVIDHFAILKVGPALTFALREALFSLAAIEEELVPAKACSGLRQVLENVMLDRPEYWQSHYHGDGNARRLARGYSYSDRVRYYWPDSQIDDAFAHLVRNLADSPIPLPLISQYLPLQYVKVRSGELQPTPRELIINHIQDILAQYHTACEGQ.

Belongs to the GatZ/KbaZ family. KbaZ subfamily. In terms of assembly, forms a complex with KbaY.

It participates in carbohydrate metabolism; D-tagatose 6-phosphate degradation; D-glyceraldehyde 3-phosphate and glycerone phosphate from D-tagatose 6-phosphate: step 2/2. In terms of biological role, component of the tagatose-1,6-bisphosphate aldolase KbaYZ that is required for full activity and stability of the Y subunit. Could have a chaperone-like function for the proper and stable folding of KbaY. When expressed alone, KbaZ does not show any aldolase activity. This chain is D-tagatose-1,6-bisphosphate aldolase subunit KbaZ, found in Escherichia coli O1:K1 / APEC.